The primary structure comprises 332 residues: Ketol-acid reductoisomerase (NADP(+)) (332 aa).

The KARI N-terminal Rossmann domain occupies 2 to 182 (AKVYHDTEVS…GATRAGVLET (181 aa)). Residues 25-28 (YGSQ), arginine 48, serine 53, and 83-86 (DTEQ) each bind NADP(+). Residue histidine 108 is part of the active site. An NADP(+)-binding site is contributed by glycine 134. The 146-residue stretch at 183-328 (TFKEETETDL…KVLREMMPWL (146 aa)) folds into the KARI C-terminal knotted domain. Positions 191, 195, 227, and 231 each coordinate Mg(2+). Serine 252 contributes to the substrate binding site.

The protein belongs to the ketol-acid reductoisomerase family. It depends on Mg(2+) as a cofactor.

The catalysed reaction is (2R)-2,3-dihydroxy-3-methylbutanoate + NADP(+) = (2S)-2-acetolactate + NADPH + H(+). It catalyses the reaction (2R,3R)-2,3-dihydroxy-3-methylpentanoate + NADP(+) = (S)-2-ethyl-2-hydroxy-3-oxobutanoate + NADPH + H(+). It participates in amino-acid biosynthesis; L-isoleucine biosynthesis; L-isoleucine from 2-oxobutanoate: step 2/4. It functions in the pathway amino-acid biosynthesis; L-valine biosynthesis; L-valine from pyruvate: step 2/4. Functionally, involved in the biosynthesis of branched-chain amino acids (BCAA). Catalyzes an alkyl-migration followed by a ketol-acid reduction of (S)-2-acetolactate (S2AL) to yield (R)-2,3-dihydroxy-isovalerate. In the isomerase reaction, S2AL is rearranged via a Mg-dependent methyl migration to produce 3-hydroxy-3-methyl-2-ketobutyrate (HMKB). In the reductase reaction, this 2-ketoacid undergoes a metal-dependent reduction by NADPH to yield (R)-2,3-dihydroxy-isovalerate. The sequence is that of Ketol-acid reductoisomerase (NADP(+)) from Dictyoglomus turgidum (strain DSM 6724 / Z-1310).